Here is a 431-residue protein sequence, read N- to C-terminus: MAFLKLYVIVLGCAKNEADFSLFKYHLKQLGHEVVDDVEDADGVVIDTCGFIVDAKQESIDTILEFASIKKQKPDFKVYVTGCLVQRYPKDLPLEIPEVDGWFGVIPPKNLAESINKTKKYITDPVAVYEFEGRVDSDLPYAYVKIADGCDRACTFCTIPKFKGGFVSRKLEDIEKEVRYLIENGKKEIVLVAQDTTGYGVDLYGKQMLPELLKRINDIDGNFWIRVMYMHPDHVTDEILKGFSYEKVVKYFDIPIQHSSDNILKLMGRTKSTKELEELFDKIRSLYPQAVLRTSIIVGFPGETKDDFEQLIDFIRTIEFDRLGGFVYSDEEDAASYNLPNKVSLKTAQKRLDTLMEVQAEISFLRNQRLVGKVIDVLFEEEVNGVIIGRSYMDAPEVDGNVFVKGHGINRFGKVKITEADTYDLEGELVE.

In terms of domain architecture, MTTase N-terminal spans 4 to 120; that stretch reads LKLYVIVLGC…LAESINKTKK (117 aa). Residues C13, C49, C83, C150, C154, and C157 each contribute to the [4Fe-4S] cluster site. The region spanning 136–365 is the Radical SAM core domain; it reads DSDLPYAYVK…MEVQAEISFL (230 aa). Residues 368–431 form the TRAM domain; that stretch reads QRLVGKVIDV…TYDLEGELVE (64 aa).

It belongs to the methylthiotransferase family. RimO subfamily. The cofactor is [4Fe-4S] cluster.

It is found in the cytoplasm. The enzyme catalyses L-aspartate(89)-[ribosomal protein uS12]-hydrogen + (sulfur carrier)-SH + AH2 + 2 S-adenosyl-L-methionine = 3-methylsulfanyl-L-aspartate(89)-[ribosomal protein uS12]-hydrogen + (sulfur carrier)-H + 5'-deoxyadenosine + L-methionine + A + S-adenosyl-L-homocysteine + 2 H(+). Its function is as follows. Catalyzes the methylthiolation of an aspartic acid residue of ribosomal protein uS12. This chain is Ribosomal protein uS12 methylthiotransferase RimO, found in Fervidobacterium nodosum (strain ATCC 35602 / DSM 5306 / Rt17-B1).